The primary structure comprises 501 residues: Phenylalanine--tRNA ligase alpha subunit (501 aa).

The L-phenylalanine site is built by threonine 340 and phenylalanine 423. Glutamate 425 lines the Mg(2+) pocket. Phenylalanine 448 provides a ligand contact to L-phenylalanine.

This sequence belongs to the class-II aminoacyl-tRNA synthetase family. Phe-tRNA synthetase alpha subunit type 2 subfamily. As to quaternary structure, tetramer of two alpha and two beta subunits. It depends on Mg(2+) as a cofactor.

It localises to the cytoplasm. The catalysed reaction is tRNA(Phe) + L-phenylalanine + ATP = L-phenylalanyl-tRNA(Phe) + AMP + diphosphate + H(+). The polypeptide is Phenylalanine--tRNA ligase alpha subunit (Methanococcus maripaludis (strain C7 / ATCC BAA-1331)).